Here is a 339-residue protein sequence, read N- to C-terminus: UDP-glucose 4-epimerase (339 aa).

NAD(+)-binding positions include Phe12–Ile13, Asp32–Ser37, Asp59–Ile60, Phe81–Lys85, Asn100, Ser125, Tyr150, Lys154, and Phe179. Ser125 and Tyr150 together coordinate substrate. Tyr150 functions as the Proton acceptor in the catalytic mechanism. Residues Asn180, Asn200–Leu201, Ala217–Phe219, Arg232, and Arg293–Asp296 each bind substrate.

It belongs to the NAD(P)-dependent epimerase/dehydratase family. In terms of assembly, homodimer. Requires NAD(+) as cofactor.

It carries out the reaction UDP-alpha-D-glucose = UDP-alpha-D-galactose. It functions in the pathway carbohydrate metabolism; galactose metabolism. Its function is as follows. Involved in the metabolism of galactose. Plays an essential role in the incorporation of galactose into meningococcal lipopolysaccharide surface molecules, which are important for pathogenesis. Catalyzes the conversion of UDP-galactose (UDP-Gal) to UDP-glucose (UDP-Glc) through a mechanism involving the transient reduction of NAD. This chain is UDP-glucose 4-epimerase (galE), found in Neisseria meningitidis serogroup C.